A 172-amino-acid chain; its full sequence is Lipoprotein signal peptidase (172 aa).

Helical transmembrane passes span 10–30 (LIWL…KAWV), 68–88 (WQLW…AFWL), and 98–118 (SALP…DRLM). Active-site residues include Asp124 and Asp142. A helical membrane pass occupies residues 138–158 (FNIADSAIVGGAIGIAVFGLF).

Belongs to the peptidase A8 family.

The protein localises to the cell inner membrane. The enzyme catalyses Release of signal peptides from bacterial membrane prolipoproteins. Hydrolyzes -Xaa-Yaa-Zaa-|-(S,diacylglyceryl)Cys-, in which Xaa is hydrophobic (preferably Leu), and Yaa (Ala or Ser) and Zaa (Gly or Ala) have small, neutral side chains.. The protein operates within protein modification; lipoprotein biosynthesis (signal peptide cleavage). This protein specifically catalyzes the removal of signal peptides from prolipoproteins. The protein is Lipoprotein signal peptidase of Xanthomonas euvesicatoria pv. vesicatoria (strain 85-10) (Xanthomonas campestris pv. vesicatoria).